The primary structure comprises 457 residues: MKKKLFGTDGVRGVANIYPMTTEIAMQLGRAAAHIFKKDHTRRHRIVIGKDTRLSGYMIENALVAGICSMGVDVLLVGPLPTPGIAFITSSMRADAGVVISASHNPYQDNGIKFFSADGFKLPDTTELEIEKLIFGNEIDSLRPVADEVGKAFRMDDAGGRYIVFLKNSFPQDLDLNGLKIVLDCANGAAYKVAPAVLEELGAEVVTLGVKPNGSNINAGCGSLYPESLAKAVKEHGAHLGMALDGDADRVIFVDEQGQEVDGDQIMAICSLDMMKQGKLAHNTLVSTVMSNMGLDIALRNAGGQVVKTAVGDRYVVEEMRRGGYNLGGEQSGHMIFLDYNTTGDGMVSALQLLAIMQRTGKPLSELAGVMTALPQVLINVRVASRQDINIVPEIARTVKAVEEKLADTGRVLIRYSGTEPLLRIMLEGQDEAEITGLAQEIADVIERHLGVRTKEQ.

Serine 103 serves as the catalytic Phosphoserine intermediate. Residues serine 103, aspartate 245, aspartate 247, and aspartate 249 each coordinate Mg(2+). The residue at position 103 (serine 103) is a Phosphoserine.

The protein belongs to the phosphohexose mutase family. Mg(2+) is required as a cofactor. Activated by phosphorylation.

The catalysed reaction is alpha-D-glucosamine 1-phosphate = D-glucosamine 6-phosphate. In terms of biological role, catalyzes the conversion of glucosamine-6-phosphate to glucosamine-1-phosphate. This Syntrophotalea carbinolica (strain DSM 2380 / NBRC 103641 / GraBd1) (Pelobacter carbinolicus) protein is Phosphoglucosamine mutase.